A 178-amino-acid chain; its full sequence is ATP synthase subunit delta (178 aa).

Belongs to the ATPase delta chain family. In terms of assembly, F-type ATPases have 2 components, F(1) - the catalytic core - and F(0) - the membrane proton channel. F(1) has five subunits: alpha(3), beta(3), gamma(1), delta(1), epsilon(1). F(0) has three main subunits: a(1), b(2) and c(10-14). The alpha and beta chains form an alternating ring which encloses part of the gamma chain. F(1) is attached to F(0) by a central stalk formed by the gamma and epsilon chains, while a peripheral stalk is formed by the delta and b chains.

The protein resides in the cell membrane. Functionally, f(1)F(0) ATP synthase produces ATP from ADP in the presence of a proton or sodium gradient. F-type ATPases consist of two structural domains, F(1) containing the extramembraneous catalytic core and F(0) containing the membrane proton channel, linked together by a central stalk and a peripheral stalk. During catalysis, ATP synthesis in the catalytic domain of F(1) is coupled via a rotary mechanism of the central stalk subunits to proton translocation. In terms of biological role, this protein is part of the stalk that links CF(0) to CF(1). It either transmits conformational changes from CF(0) to CF(1) or is implicated in proton conduction. This Desulfitobacterium hafniense (strain Y51) protein is ATP synthase subunit delta.